Consider the following 456-residue polypeptide: Senecionine N-oxygenase (456 aa).

The N-terminal stretch at 1–22 is a signal peptide; it reads MFRKFVIMLVLSLLVAAGISQA. 32 to 37 contributes to the FAD binding site; the sequence is GAGYSG. An NADP(+)-binding site is contributed by 215 to 220; the sequence is GAGPSG.

This sequence belongs to the FMO family. In terms of assembly, homotetramer. It depends on FAD as a cofactor. In terms of tissue distribution, hemolymph.

It is found in the secreted. The catalysed reaction is senecionine + NADPH + O2 = senecionine N-oxide + NADP(+) + H2O. In terms of biological role, NADPH-dependent monooxygenase that detoxifies senecionine and similar plant alkaloids that are ingested by the larvae. Is active towards a narrow range of related substrates with highest activity towards senecionine, followed by seneciphylline, retrorsine, monocrotaline, senecivernine, axillarine and axillaridine. The polypeptide is Senecionine N-oxygenase (sno1) (Tyria jacobaeae (Cinnabar moth)).